Here is a 241-residue protein sequence, read N- to C-terminus: MSMLFYTLITAFLIGVQAEPYTDSNVPEGDSVPEAHWTKLQHSLDTALRRARSAPTAPIAARVTGQTRNITVDPRLFKKRRLHSPRVLFSTQPPPTSSDTLDLDFQAHGTIPFNRTHRSKRSSTHPVFHMGEFSVCDSVSVWVGDKTTATDIKGKEVTVLAEVNINNSVFRQYFFETKCRASNPVESGCRGIDSKHWNSYCTTTHTFVKALTTDEKQAAWRFIRIDTACVCVLSRKATRRG.

The signal sequence occupies residues 1 to 18 (MSMLFYTLITAFLIGVQA). Residues 19 to 121 (EPYTDSNVPE…PFNRTHRSKR (103 aa)) constitute a propeptide that is removed on maturation. 2 N-linked (GlcNAc...) asparagine glycosylation sites follow: asparagine 69 and asparagine 114. 3 disulfide bridges follow: cysteine 136-cysteine 201, cysteine 179-cysteine 229, and cysteine 189-cysteine 231. Residues arginine 171, tyrosine 173, and lysine 209 each contribute to the a 1-acyl-sn-glycero-3-phospho-(1D-myo-inositol) site. An a 1-acyl-sn-glycero-3-phospho-L-serine-binding site is contributed by arginine 171. Lysine 209 is a binding site for a 1-acyl-sn-glycero-3-phospho-L-serine.

It belongs to the NGF-beta family. Homodimer. The homodimer interacts with a single NTRK1 chain. The homodimer interacts with a single NGFR chain. The NGF dimer interacts with a single SORCS2 chain (via extracellular domain). The NGF precursor (proNGF) binds to a receptor complex formed by SORT1 and NGFR, which leads to NGF endocytosis. Both mature NGF and the immature NGF precursor (proNGF) interact with SORCS2 and with the heterodimer formed by SORCS2 and NGFR (via extracellular domains). The NGF precursor (proNGF) has much higher affinity for SORCS2 than mature NGF. The NGF precursor (proNGF) has much higher affinity for SORT1 than mature NGF. Interacts with ADAM10 in a divalent cation-dependent manner. Interacts with SORCS3. As to expression, detected in submaxillary gland (at protein level). Highly expressed in male submaxillary gland. Levels are much lower in female submaxillary gland.

The protein localises to the secreted. Its subcellular location is the endosome lumen. Its function is as follows. Nerve growth factor is important for the development and maintenance of the sympathetic and sensory nervous systems. Extracellular ligand for the NTRK1 and NGFR receptors, activates cellular signaling cascades to regulate neuronal proliferation, differentiation and survival. The immature NGF precursor (proNGF) functions as a ligand for the heterodimeric receptor formed by SORCS2 and NGFR, and activates cellular signaling cascades that lead to inactivation of RAC1 and/or RAC2, reorganization of the actin cytoskeleton and neuronal growth cone collapse. In contrast to mature NGF, the precursor form (proNGF) promotes neuronal apoptosis (in vitro). Inhibits metalloproteinase-dependent proteolysis of platelet glycoprotein VI. Binds lysophosphatidylinositol and lysophosphatidylserine between the two chains of the homodimer. The lipid-bound form promotes histamine relase from mast cells, contrary to the lipid-free form. This Mus musculus (Mouse) protein is Beta-nerve growth factor (Ngf).